Here is a 404-residue protein sequence, read N- to C-terminus: Phosphopentomutase (404 aa).

Mn(2+) contacts are provided by Asp-10, Asp-303, His-308, Asp-344, His-345, and His-356.

This sequence belongs to the phosphopentomutase family. Mn(2+) is required as a cofactor.

The protein localises to the cytoplasm. It catalyses the reaction 2-deoxy-alpha-D-ribose 1-phosphate = 2-deoxy-D-ribose 5-phosphate. The catalysed reaction is alpha-D-ribose 1-phosphate = D-ribose 5-phosphate. It functions in the pathway carbohydrate degradation; 2-deoxy-D-ribose 1-phosphate degradation; D-glyceraldehyde 3-phosphate and acetaldehyde from 2-deoxy-alpha-D-ribose 1-phosphate: step 1/2. Functionally, isomerase that catalyzes the conversion of deoxy-ribose 1-phosphate (dRib-1-P) and ribose 1-phosphate (Rib-1-P) to deoxy-ribose 5-phosphate (dRib-5-P) and ribose 5-phosphate (Rib-5-P), respectively. This is Phosphopentomutase from Shewanella baltica (strain OS223).